We begin with the raw amino-acid sequence, 167 residues long: UPF0587 protein F46B6.12 (167 aa).

4 residues coordinate Zn(2+): C34, C37, C68, and C71.

This sequence belongs to the UPF0587 family.

The polypeptide is UPF0587 protein F46B6.12 (Caenorhabditis elegans).